The chain runs to 334 residues: GTP 3',8-cyclase (334 aa).

Positions 11 to 236 constitute a Radical SAM core domain; that stretch reads GFNRKIDYLR…ESTESSQGPA (226 aa). R20 provides a ligand contact to GTP. Residues C27 and C31 each coordinate [4Fe-4S] cluster. Y33 contacts S-adenosyl-L-methionine. C34 serves as a coordination point for [4Fe-4S] cluster. Residue R69 participates in GTP binding. G73 provides a ligand contact to S-adenosyl-L-methionine. T100 lines the GTP pocket. S-adenosyl-L-methionine is bound at residue S124. K161 serves as a coordination point for GTP. M195 is a binding site for S-adenosyl-L-methionine. Positions 260 and 263 each coordinate [4Fe-4S] cluster. 265 to 267 serves as a coordination point for GTP; the sequence is RVR. C277 contacts [4Fe-4S] cluster.

The protein belongs to the radical SAM superfamily. MoaA family. Monomer and homodimer. The cofactor is [4Fe-4S] cluster.

The catalysed reaction is GTP + AH2 + S-adenosyl-L-methionine = (8S)-3',8-cyclo-7,8-dihydroguanosine 5'-triphosphate + 5'-deoxyadenosine + L-methionine + A + H(+). It participates in cofactor biosynthesis; molybdopterin biosynthesis. Functionally, catalyzes the cyclization of GTP to (8S)-3',8-cyclo-7,8-dihydroguanosine 5'-triphosphate. In Pseudomonas putida (strain W619), this protein is GTP 3',8-cyclase.